A 450-amino-acid polypeptide reads, in one-letter code: uncharacterized protein (450 aa).

Belongs to the heat shock protein 70 family.

This is an uncharacterized protein from Escherichia coli (strain K12).